The chain runs to 59 residues: Potassium channel toxin alpha-KTx 1.1 (59 aa).

An N-terminal signal peptide occupies residues 1-22; that stretch reads MKILSVLLLALIICSIVGWSEA. Pyrrolidone carboxylic acid is present on glutamine 23. 3 disulfides stabilise this stretch: cysteine 29-cysteine 50, cysteine 35-cysteine 55, and cysteine 39-cysteine 57. Residues 48–55 are interaction with Ca(2+)-activated K(+) channels; that stretch reads GKCMNKKC.

This sequence belongs to the short scorpion toxin superfamily. Potassium channel inhibitor family. Alpha-KTx 01 subfamily. As to expression, expressed by the venom gland.

Its subcellular location is the secreted. Its function is as follows. This toxin inhibits numerous potassium channels: shaker (Ki=227 nM), Kv1.2/KCNA2 (nanomolar range), Kv1.3/KCNA3 (nanomolar range), Kv1.5/KCNA5 (Kd&gt;100 nM), Kv1.6/KCNA6 (Ki=22 nM), KCa1.1/KCNMA1 (IC(50)=5.9 nM). It blocks channel activity by a simple bimolecular inhibition process. It also shows a weak interaction with nicotinic acetylcholine receptors (nAChR), suggesting it may weakly inhibit it. It also exhibits pH-specific antimicrobial activities against bacteria (B.subtilis, E.coli and S.aureus) and the fungus C.albicans. The sequence is that of Potassium channel toxin alpha-KTx 1.1 from Leiurus hebraeus (Hebrew deathstalker scorpion).